Reading from the N-terminus, the 123-residue chain is Transmembrane protein 254 (123 aa).

Helical transmembrane passes span 15–35 (LFWFTVIAVSFSYYTWVVFWP), 63–83 (NGYWLAWLVHVGESLYALVLC), and 95–115 (LLWFLQTFLFGVASLSILFAY).

Its subcellular location is the membrane. In Rattus norvegicus (Rat), this protein is Transmembrane protein 254 (Tmem254).